A 220-amino-acid chain; its full sequence is Small ribosomal subunit protein mS23 (220 aa).

This sequence belongs to the mitochondrion-specific ribosomal protein mS23 family. As to quaternary structure, component of the mitochondrial small ribosomal subunit (mt-SSU). Mature yeast 74S mitochondrial ribosomes consist of a small (37S) and a large (54S) subunit. The 37S small subunit contains a 15S ribosomal RNA (15S mt-rRNA) and at least 32 different proteins. The 54S large subunit contains a 21S rRNA (21S mt-rRNA) and at least 45 different proteins.

The protein localises to the mitochondrion. Component of the mitochondrial ribosome (mitoribosome), a dedicated translation machinery responsible for the synthesis of mitochondrial genome-encoded proteins, including at least some of the essential transmembrane subunits of the mitochondrial respiratory chain. The mitoribosomes are attached to the mitochondrial inner membrane and translation products are cotranslationally integrated into the membrane. The sequence is that of Small ribosomal subunit protein mS23 (rsm25) from Schizosaccharomyces pombe (strain 972 / ATCC 24843) (Fission yeast).